The following is a 439-amino-acid chain: MLRFAPSPTGDMHIGNLRAAIFNYIVAKQQHKPFLIRIEDTDKERNIEGKDQEILEILKFMGISWDKLVYQSHNIDYHREMAEKLLKENKAFYCYASTEFLEREKEKAKNEKRPFRYLDEWATLEKDKHHAPVVRLKAPNHAVSFNDAIKKEVKFEPDELDSFVLLRQDKSPTYNFACTCDDLLYEVSLIIRGEDHVSNTPKQILIQQALGSNDPIVYAHLPIILDEVSGKKMSKRDEASSVKWLLNQGFLPVAIANYLITIGNKVPKEVFSLDEAIEWFSLENLSNSPAHFNLKYLKHLNHEHLKLLDDEKLLKLTSIKDKNLLGLLRLFIEECGTLLELKEKISLFLEPKDIVKTYENEDFKERCLALFNALKSMDFQVYKDFESFKKEAMRLSQLKGKDFFKPLRILLTGNSHGVELPLIFPYIQSHYQEVLRLKA.

A 'HIGH' region motif is present at residues 6 to 16 (PSPTGDMHIGN). Residues 232–236 (KMSKR) carry the 'KMSKS' region motif. Residue lysine 235 coordinates ATP.

It belongs to the class-I aminoacyl-tRNA synthetase family. Glutamate--tRNA ligase type 1 subfamily. In terms of assembly, monomer.

It localises to the cytoplasm. The catalysed reaction is tRNA(Glu) + L-glutamate + ATP = L-glutamyl-tRNA(Glu) + AMP + diphosphate. Its function is as follows. Catalyzes the attachment of glutamate to tRNA(Glu) in a two-step reaction: glutamate is first activated by ATP to form Glu-AMP and then transferred to the acceptor end of tRNA(Glu). In Helicobacter pylori (strain HPAG1), this protein is Glutamate--tRNA ligase 2.